A 465-amino-acid polypeptide reads, in one-letter code: Hepatocyte nuclear factor 6 (465 aa).

4 disordered regions span residues 17–55, 120–141, 264–290, and 442–465; these read SHEPVPAPADLLGGSPHARSSVAHRGSHLPPAHPRSMGM, DKFPHHHHHHHHHHHPHHHQRL, LLGTAREPNPSVTGAQVSNGSNSGQME, and DKWQDEGSSNSGNSSSSSSTCTKA. Basic residues predominate over residues 123–140; that stretch reads PHHHHHHHHHHHPHHHQR. Polar residues predominate over residues 273–288; it reads PSVTGAQVSNGSNSGQ. The CUT DNA-binding region spans 283–369; sequence GSNSGQMEEI…QRMSALRLAA (87 aa). The homeobox DNA-binding region spans 385-444; the sequence is PKKPRLVFTDVQRRTLHAIFKENKRPSKELQITISQQLGLELSTVSNFFMNARRRSLDKW. The span at 448-465 shows a compositional bias: low complexity; it reads GSSNSGNSSSSSSTCTKA.

This sequence belongs to the CUT homeobox family. As to quaternary structure, binds DNA as a monomer. In terms of tissue distribution, highly expressed in liver; lower expression in testis and skin.

It is found in the nucleus. Functionally, transcriptional activator. Binds the consensus sequence 5'-DHWATTGAYTWWD-3' on a variety of gene promoters such as those of HNF3B and TTR. Important for liver genes transcription. The protein is Hepatocyte nuclear factor 6 (ONECUT1) of Homo sapiens (Human).